The primary structure comprises 411 residues: Metal-binding regulatory protein cuf1 (411 aa).

A DNA-binding region (copper-fist) is located at residues 1–40 (MVVINNVKMACMKCIRGHRSSTCKHNDRELFPIRPKGRPI). Residues Cys11, Cys14, Cys23, and His25 each coordinate Zn(2+). The segment at 63–92 (SRKKGSKCSTSSTTDLDSSSASNSSCSIPS) is disordered. Residues 69-92 (KCSTSSTTDLDSSSASNSSCSIPS) are compositionally biased toward low complexity.

The protein resides in the cytoplasm. The protein localises to the nucleus. Functionally, copper-sensing transcription factor that regulates iron uptake genes. Under copper starvation conditions activates the transcription of the copper transport genes, ctr4, ctr5 and ctr6. The sequence is that of Metal-binding regulatory protein cuf1 (cuf1) from Schizosaccharomyces pombe (strain 972 / ATCC 24843) (Fission yeast).